A 145-amino-acid chain; its full sequence is D-aminoacyl-tRNA deacylase (145 aa).

Positions 137-138 (GP) match the Gly-cisPro motif, important for rejection of L-amino acids motif.

This sequence belongs to the DTD family. In terms of assembly, homodimer.

The protein resides in the cytoplasm. It catalyses the reaction glycyl-tRNA(Ala) + H2O = tRNA(Ala) + glycine + H(+). It carries out the reaction a D-aminoacyl-tRNA + H2O = a tRNA + a D-alpha-amino acid + H(+). Its function is as follows. An aminoacyl-tRNA editing enzyme that deacylates mischarged D-aminoacyl-tRNAs. Also deacylates mischarged glycyl-tRNA(Ala), protecting cells against glycine mischarging by AlaRS. Acts via tRNA-based rather than protein-based catalysis; rejects L-amino acids rather than detecting D-amino acids in the active site. By recycling D-aminoacyl-tRNA to D-amino acids and free tRNA molecules, this enzyme counteracts the toxicity associated with the formation of D-aminoacyl-tRNA entities in vivo and helps enforce protein L-homochirality. This Pseudomonas fluorescens (strain Pf0-1) protein is D-aminoacyl-tRNA deacylase.